The primary structure comprises 383 residues: Protein dyf-4 (383 aa).

The signal sequence occupies residues 1 to 16 (MKTIWLLLATCIHVFA). Residue Asn-64 is glycosylated (N-linked (GlcNAc...) asparagine).

Interacts with daf-6. As to expression, expressed in sheath and socket glial cells in both the amphid and phasmid ciliated sensory neurons (at protein level).

It localises to the secreted. In terms of biological role, required for the localization of daf-6 to the socket glial channel and the sheath lumen. In association with daf-6, plays a role in dendrite extension and ciliogenesis to ensure the formation of glial channels in amphid and phasmid ciliated sensory neurons. The protein is Protein dyf-4 of Caenorhabditis elegans.